Here is a 194-residue protein sequence, read N- to C-terminus: Peptidyl-tRNA hydrolase (194 aa).

Tyrosine 17 is a binding site for tRNA. Histidine 22 (proton acceptor) is an active-site residue. TRNA-binding residues include tyrosine 68, asparagine 70, and asparagine 116.

Belongs to the PTH family. In terms of assembly, monomer.

The protein localises to the cytoplasm. The enzyme catalyses an N-acyl-L-alpha-aminoacyl-tRNA + H2O = an N-acyl-L-amino acid + a tRNA + H(+). Functionally, hydrolyzes ribosome-free peptidyl-tRNAs (with 1 or more amino acids incorporated), which drop off the ribosome during protein synthesis, or as a result of ribosome stalling. Catalyzes the release of premature peptidyl moieties from peptidyl-tRNA molecules trapped in stalled 50S ribosomal subunits, and thus maintains levels of free tRNAs and 50S ribosomes. The chain is Peptidyl-tRNA hydrolase from Pseudomonas fluorescens (strain ATCC BAA-477 / NRRL B-23932 / Pf-5).